Here is a 121-residue protein sequence, read N- to C-terminus: Large ribosomal subunit protein bL19 (121 aa).

The protein belongs to the bacterial ribosomal protein bL19 family.

Its function is as follows. This protein is located at the 30S-50S ribosomal subunit interface and may play a role in the structure and function of the aminoacyl-tRNA binding site. This chain is Large ribosomal subunit protein bL19, found in Chlamydia trachomatis serovar L2 (strain ATCC VR-902B / DSM 19102 / 434/Bu).